The primary structure comprises 152 residues: Methylglyoxal synthase (152 aa).

Residues arginine 6–lysine 152 enclose the MGS-like domain. Substrate contacts are provided by residues histidine 19, lysine 23, threonine 45 to threonine 48, and serine 65 to glycine 66. The active-site Proton donor/acceptor is aspartate 71. Histidine 98 contacts substrate.

The protein belongs to the methylglyoxal synthase family.

The enzyme catalyses dihydroxyacetone phosphate = methylglyoxal + phosphate. Catalyzes the formation of methylglyoxal from dihydroxyacetone phosphate. In Pectobacterium atrosepticum (strain SCRI 1043 / ATCC BAA-672) (Erwinia carotovora subsp. atroseptica), this protein is Methylglyoxal synthase.